A 576-amino-acid polypeptide reads, in one-letter code: Acyl-CoA ligase sidI (576 aa).

Residues 3-11 (PVTTKTIRP) carry the PTS2-type peroxisomal targeting signal motif. ATP-binding residues include Asp-439, Arg-454, and Lys-553.

Belongs to the ATP-dependent AMP-binding enzyme family.

Its subcellular location is the peroxisome. It functions in the pathway siderophore biosynthesis. Acyl-CoA ligase; part of the gene cluster that mediates the biosynthesis of at least 11 siderophores, including beauverichelin A, dimerumic acid (DA), Na-dimethyl coprogen (NADC), eleutherazine B, ferricrocin (FC), fusarinine A, fusarinine C (FsC), metachelin A, mevalonolactone, rhodotorulic acid (RA) and tenellin. This cocktail of siderophores for iron metabolism is essential for virulence, and more specifically for the fungal virulence in penetrating through the host cuticle. Siderophore synthesis is also involved in conidial germination under iron-deficient conditions. For biosynthesis of fusarinine C, the transacylase SIDF transfers anhydromevalonyl to N(5)-hydroxyornithine. The required anhydromevalonyl-CoA moiety is derived from mevalonate by CoA ligation and dehydration catalyzed by SIDI and sidH respectively. This is Acyl-CoA ligase sidI from Beauveria bassiana (strain ARSEF 2860) (White muscardine disease fungus).